The following is a 323-amino-acid chain: uncharacterized protein (323 aa).

It localises to the mitochondrion. This is an uncharacterized protein from Schizosaccharomyces pombe (strain 972 / ATCC 24843) (Fission yeast).